Reading from the N-terminus, the 400-residue chain is 1-deoxy-D-xylulose 5-phosphate reductoisomerase (400 aa).

7 residues coordinate NADPH: threonine 10, glycine 11, serine 12, isoleucine 13, glycine 36, asparagine 38, and asparagine 124. Lysine 125 contributes to the 1-deoxy-D-xylulose 5-phosphate binding site. An NADPH-binding site is contributed by glutamate 126. Aspartate 150 provides a ligand contact to Mn(2+). Residues serine 151, glutamate 152, serine 186, and histidine 209 each contribute to the 1-deoxy-D-xylulose 5-phosphate site. Position 152 (glutamate 152) interacts with Mn(2+). Residue glycine 215 coordinates NADPH. Serine 222, asparagine 227, lysine 228, and glutamate 231 together coordinate 1-deoxy-D-xylulose 5-phosphate. Glutamate 231 contributes to the Mn(2+) binding site.

It belongs to the DXR family. The cofactor is Mg(2+). Mn(2+) is required as a cofactor.

The catalysed reaction is 2-C-methyl-D-erythritol 4-phosphate + NADP(+) = 1-deoxy-D-xylulose 5-phosphate + NADPH + H(+). Its pathway is isoprenoid biosynthesis; isopentenyl diphosphate biosynthesis via DXP pathway; isopentenyl diphosphate from 1-deoxy-D-xylulose 5-phosphate: step 1/6. In terms of biological role, catalyzes the NADPH-dependent rearrangement and reduction of 1-deoxy-D-xylulose-5-phosphate (DXP) to 2-C-methyl-D-erythritol 4-phosphate (MEP). This chain is 1-deoxy-D-xylulose 5-phosphate reductoisomerase, found in Aliivibrio fischeri (strain MJ11) (Vibrio fischeri).